A 42-amino-acid polypeptide reads, in one-letter code: Packaging protein P20 (42 aa).

The helical transmembrane segment at I11 to C31 threads the bilayer.

As to quaternary structure, heterodimer of P20 and P22; further multimerizes as hexamers of heterodimers. Part of the dodecameric portal complex that is composed of the packaging efficiency factor P6, the DNA packaging ATPase P9, and the internal heterododecamer P20/P22 which spans the virion inner membrane.

It localises to the virion membrane. Functionally, together with P22, forms the internal part of the portal complex embeded in the virion internal membrane and which plays critical roles in genome packaging and genome ejection. Both proteins multimerize as a single ring-shaped heterdodecamer arranged around a central channel and interact with the P6/P9 external part of the portal. The sequence is that of Packaging protein P20 (XX) from Acinetobacter calcoaceticus (Arthrobacter siderocapsulatus).